An 88-amino-acid chain; its full sequence is Carboxysome shell vertex protein CsoS4A (88 aa).

The BMV domain occupies 1 to 76; that stretch reads MLICKVLKPL…SDLTIVGIID (76 aa).

This sequence belongs to the CcmL/EutN family. CsoS4 subfamily. As to quaternary structure, homopentamer.

It is found in the carboxysome. Functionally, probably forms vertices in the carboxysome, a polyhedral inclusion where RuBisCO (ribulose bisphosphate carboxylase, cbbL-cbbS) is sequestered. Has been modeled to induce curvature upon insertion into an otherwise flat hexagonal layer of major carboxysome subunits. Has not been identified in purified carboxysomes; it is expected to be present in very low amounts. This Prochlorococcus marinus subsp. pastoris (strain CCMP1986 / NIES-2087 / MED4) protein is Carboxysome shell vertex protein CsoS4A.